Reading from the N-terminus, the 1654-residue chain is Mediator of RNA polymerase II transcription subunit 12 (1654 aa).

2 disordered regions span residues 52-72 (DLNG…LSGN) and 1481-1530 (SKQT…SFQT). Polar residues predominate over residues 1515-1530 (PLSSARPSSEAASFQT).

This sequence belongs to the Mediator complex subunit 12 family. Component of the SRB8-11 complex, which itself associates with the Mediator complex.

Its subcellular location is the nucleus. In terms of biological role, component of the SRB8-11 complex. The SRB8-11 complex is a regulatory module of the Mediator complex which is itself involved in regulation of basal and activated RNA polymerase II-dependent transcription. The SRB8-11 complex may be involved in the transcriptional repression of a subset of genes regulated by Mediator. It may inhibit the association of the Mediator complex with RNA polymerase II to form the holoenzyme complex. This is Mediator of RNA polymerase II transcription subunit 12 (SRB8) from Scheffersomyces stipitis (strain ATCC 58785 / CBS 6054 / NBRC 10063 / NRRL Y-11545) (Yeast).